We begin with the raw amino-acid sequence, 191 residues long: Salivary lipocalin (191 aa).

The signal sequence occupies residues 1–16; that stretch reads MKLLLLLCLGLTLASS. Asn69 carries N-linked (GlcNAc...) asparagine glycosylation. Cys84 and Cys176 are oxidised to a cystine.

This sequence belongs to the calycin superfamily. Lipocalin family. In terms of assembly, homodimer. In terms of tissue distribution, in the submaxillary salivary glands of mature male pigs, but absent from that of females. Expression was much lower in submaxillary glands of castrated male pigs than in sexually mature individuals.

The protein localises to the secreted. In terms of biological role, binds pheromones, the pheromones are released from the saliva of males and affect the sexual behavior of females. This Sus scrofa (Pig) protein is Salivary lipocalin (SAL1).